Consider the following 131-residue polypeptide: Fumarate reductase subunit C (131 aa).

3 helical membrane passes run 30–50, 57–77, and 109–129; these read EGTA…LFAL, WMGF…LITL, and IIKG…YVAL.

This sequence belongs to the FrdC family. Part of an enzyme complex containing four subunits: a flavoprotein (FrdA), an iron-sulfur protein (FrdB), and two hydrophobic anchor proteins (FrdC and FrdD).

It localises to the cell inner membrane. Two distinct, membrane-bound, FAD-containing enzymes are responsible for the catalysis of fumarate and succinate interconversion; fumarate reductase is used in anaerobic growth, and succinate dehydrogenase is used in aerobic growth. Anchors the catalytic components of the fumarate reductase complex to the cell inner membrane, binds quinones. In Salmonella heidelberg (strain SL476), this protein is Fumarate reductase subunit C.